The chain runs to 425 residues: Dihydroorotase (425 aa).

Residues H61 and H63 each coordinate Zn(2+). Substrate contacts are provided by residues 63–65 (HLR) and N95. Residues D153, H180, and H233 each contribute to the Zn(2+) site. Residue N279 participates in substrate binding. D306 is a Zn(2+) binding site. D306 is a catalytic residue. H310 contacts substrate.

This sequence belongs to the metallo-dependent hydrolases superfamily. DHOase family. Class I DHOase subfamily. Zn(2+) is required as a cofactor.

It catalyses the reaction (S)-dihydroorotate + H2O = N-carbamoyl-L-aspartate + H(+). Its pathway is pyrimidine metabolism; UMP biosynthesis via de novo pathway; (S)-dihydroorotate from bicarbonate: step 3/3. Catalyzes the reversible cyclization of carbamoyl aspartate to dihydroorotate. The sequence is that of Dihydroorotase from Geotalea daltonii (strain DSM 22248 / JCM 15807 / FRC-32) (Geobacter daltonii).